Reading from the N-terminus, the 409-residue chain is Tyrosine--tRNA ligase (409 aa).

The 'HIGH' region motif lies at 54-63; sequence PTAPDIHLGH. The 'KMSKS' region motif lies at 238 to 242; it reads KMSKS. K241 lines the ATP pocket. Residues 347–407 enclose the S4 RNA-binding domain; that stretch reads QGILRILREA…GKRKFARVKL (61 aa).

It belongs to the class-I aminoacyl-tRNA synthetase family. TyrS type 2 subfamily. In terms of assembly, homodimer.

The protein resides in the cytoplasm. It carries out the reaction tRNA(Tyr) + L-tyrosine + ATP = L-tyrosyl-tRNA(Tyr) + AMP + diphosphate + H(+). Its function is as follows. Catalyzes the attachment of tyrosine to tRNA(Tyr) in a two-step reaction: tyrosine is first activated by ATP to form Tyr-AMP and then transferred to the acceptor end of tRNA(Tyr). The polypeptide is Tyrosine--tRNA ligase (Bordetella parapertussis (strain 12822 / ATCC BAA-587 / NCTC 13253)).